A 160-amino-acid polypeptide reads, in one-letter code: MDTISNKTGEGGVIMVALEDLLNWAERSSLWPITFGLACCAIEMMGAYASHYDLDRLGVIPRNSPRQADVMIVSGTVTFKMADSIRRLYDQMPEPRYVISMGSCANCGGPYWQHGYHVVKGVDRIIPVDVYVPGCPPRPEALIGGILKLQEKIKAKLTYS.

The [4Fe-4S] cluster site is built by Cys39, Cys40, Cys104, and Cys135.

Belongs to the complex I 20 kDa subunit family. As to quaternary structure, NDH-1 is composed of 14 different subunits. Subunits NuoB, C, D, E, F, and G constitute the peripheral sector of the complex. The cofactor is [4Fe-4S] cluster.

It localises to the cell membrane. It catalyses the reaction a quinone + NADH + 5 H(+)(in) = a quinol + NAD(+) + 4 H(+)(out). Functionally, NDH-1 shuttles electrons from NADH, via FMN and iron-sulfur (Fe-S) centers, to quinones in the respiratory chain. The immediate electron acceptor for the enzyme in this species is believed to be a menaquinone. Couples the redox reaction to proton translocation (for every two electrons transferred, four hydrogen ions are translocated across the cytoplasmic membrane), and thus conserves the redox energy in a proton gradient. This chain is NADH-quinone oxidoreductase subunit B, found in Amoebophilus asiaticus (strain 5a2).